Here is a 386-residue protein sequence, read N- to C-terminus: Succinate--CoA ligase [ADP-forming] subunit beta (386 aa).

The ATP-grasp domain occupies 9-244 (KEILRKYGVP…HDEEDPLETR (236 aa)). ATP contacts are provided by residues K46, 53–55 (GRG), E99, C102, and E107. The Mg(2+) site is built by N199 and D213. Residues N264 and 321 to 323 (GIM) each bind substrate.

The protein belongs to the succinate/malate CoA ligase beta subunit family. Heterotetramer of two alpha and two beta subunits. It depends on Mg(2+) as a cofactor.

The enzyme catalyses succinate + ATP + CoA = succinyl-CoA + ADP + phosphate. The catalysed reaction is GTP + succinate + CoA = succinyl-CoA + GDP + phosphate. The protein operates within carbohydrate metabolism; tricarboxylic acid cycle; succinate from succinyl-CoA (ligase route): step 1/1. Functionally, succinyl-CoA synthetase functions in the citric acid cycle (TCA), coupling the hydrolysis of succinyl-CoA to the synthesis of either ATP or GTP and thus represents the only step of substrate-level phosphorylation in the TCA. The beta subunit provides nucleotide specificity of the enzyme and binds the substrate succinate, while the binding sites for coenzyme A and phosphate are found in the alpha subunit. This is Succinate--CoA ligase [ADP-forming] subunit beta from Rickettsia typhi (strain ATCC VR-144 / Wilmington).